Reading from the N-terminus, the 186-residue chain is Signal peptidase complex catalytic subunit SEC11 (186 aa).

The Cytoplasmic portion of the chain corresponds to 1-20 (MDALGLSKLRHLKPRQLLSQ). Residues 21-41 (VLNFALILSTAFMLWKGLSVA) traverse the membrane as a helical; Signal-anchor for type II membrane protein segment. The Lumenal segment spans residues 42–186 (TDSPSPIVVV…MGLLVIVQRE (145 aa)). Active-site charge relay system residues include Ser55, His102, and Asp128. Residues 172-183 (ALLGIMGLLVIV) form a C-terminal short (CTS) helix region.

The protein belongs to the peptidase S26B family. In terms of assembly, component of the signal peptidase complex (SPC) composed of a catalytic subunit SEC11 and three accessory subunits SPC1, SPC2 and SPC3. The complex induces a local thinning of the ER membrane which is used to measure the length of the signal peptide (SP) h-region of protein substrates. This ensures the selectivity of the complex towards h-regions shorter than 18-20 amino acids. SPC associates with the translocon complex.

It is found in the endoplasmic reticulum membrane. The enzyme catalyses Cleavage of hydrophobic, N-terminal signal or leader sequences from secreted and periplasmic proteins.. Catalytic component of the signal peptidase complex (SPC) which catalyzes the cleavage of N-terminal signal sequences from nascent proteins as they are translocated into the lumen of the endoplasmic reticulum. Specifically cleaves N-terminal signal peptides that contain a hydrophobic alpha-helix (h-region) shorter than 18-20 amino acids. This Tuber melanosporum (strain Mel28) (Perigord black truffle) protein is Signal peptidase complex catalytic subunit SEC11 (SEC11).